Reading from the N-terminus, the 255-residue chain is Ribonuclease HII (255 aa).

The RNase H type-2 domain occupies 72 to 255; it reads NYIAGVDEAG…RLSFVKNFVE (184 aa). A divalent metal cation contacts are provided by Asp-78, Glu-79, and Asp-170.

The protein belongs to the RNase HII family. The cofactor is Mn(2+). Mg(2+) is required as a cofactor.

The protein resides in the cytoplasm. It carries out the reaction Endonucleolytic cleavage to 5'-phosphomonoester.. Its function is as follows. Endonuclease that specifically degrades the RNA of RNA-DNA hybrids. The sequence is that of Ribonuclease HII from Ruminiclostridium cellulolyticum (strain ATCC 35319 / DSM 5812 / JCM 6584 / H10) (Clostridium cellulolyticum).